The following is a 120-amino-acid chain: MANPHQIYRHDAAWDRQVFRSLATSLILHGHIKTTLDRAKRLRSVVEKLITKAKKNDLAARRQILSFLYGQKTKAGIKVMPYLFNKVAPRYQERNGGYTRIVRIPSRLGDNSKMAIIELV.

This sequence belongs to the bacterial ribosomal protein bL17 family. Part of the 50S ribosomal subunit. Contacts protein L32.

This chain is Large ribosomal subunit protein bL17, found in Mesomycoplasma hyopneumoniae (strain 7448) (Mycoplasma hyopneumoniae).